The primary structure comprises 80 residues: Delta-actitoxin-Amc2a (80 aa).

A signal peptide spans 1 to 19 (MNKVLFLCLVVLCATSAFA). The propeptide occupies 20-30 (AEEEYVERAPV). 3 cysteine pairs are disulfide-bonded: cysteine 37/cysteine 73, cysteine 39/cysteine 65, and cysteine 55/cysteine 74. Proline 56 carries the post-translational modification Hydroxyproline.

The protein belongs to the sea anemone type 3 (BDS) potassium channel toxin family.

It is found in the secreted. Its subcellular location is the nematocyst. Its function is as follows. Neurotoxon that induces paralysis when injected into crabs. The sequence is that of Delta-actitoxin-Amc2a from Antheopsis maculata (Sea anemone).